Reading from the N-terminus, the 512-residue chain is MKKQHDTIIVLDFGSQYNQLIARRIREFGVYSELHPHTITAEEIKEINPKGIIFSGGPNSVYGEGALHCDEKIFDLGLPIFGICYGMQLMTQKFGGKVERANHREYGKAVLKVENESKLYANLPEEQVVWMSHGDLVTGLPEGFVVDATSESCPIAGMSNEAKNLYGVQFHPEVRHSEHGNDLIKNFVFGVCGCSEGWNMENFIEVELEKIRETVGDKKVLCALSGGVDSSVVAVLIHKAIGDQLTCIFVDHGLLRKGEAEGVMKTFSEGFHMNVIKVDAKERFMNKLKGVEDPEQKRKIIGNEFIYVFDDEASKLEGMDFLAQGTLYTDIVESGTATAQTIKSHHNVGGLPEDMQFKLIEPLNTLFKDEVRVLGSELGIPDEIVWRQPFPGPGLGIRVLGEITEEKLEIVRESDAILREEIIKAGLDREIWQYFTALPGMRSVGVMGDERTYDYTVGIRAVTSIDGMTADWARIPWDVLEKISVRIVNEVKHVNRIVYDVTSKPPATIEWE.

In terms of domain architecture, Glutamine amidotransferase type-1 spans threonine 7 to glycine 197. The active-site Nucleophile is the cysteine 84. Catalysis depends on residues histidine 171 and glutamate 173. The region spanning tryptophan 198–arginine 387 is the GMPS ATP-PPase domain. Serine 225–serine 231 contributes to the ATP binding site.

Homodimer.

It catalyses the reaction XMP + L-glutamine + ATP + H2O = GMP + L-glutamate + AMP + diphosphate + 2 H(+). Its pathway is purine metabolism; GMP biosynthesis; GMP from XMP (L-Gln route): step 1/1. Functionally, catalyzes the synthesis of GMP from XMP. In Bacillus cereus (strain ATCC 10987 / NRS 248), this protein is GMP synthase [glutamine-hydrolyzing].